Here is an 827-residue protein sequence, read N- to C-terminus: Glycerol-3-phosphate acyltransferase (827 aa).

Residues 325 to 330 carry the HXXXXD motif motif; the sequence is CHRSHM.

This sequence belongs to the GPAT/DAPAT family.

The protein resides in the cell inner membrane. The enzyme catalyses sn-glycerol 3-phosphate + an acyl-CoA = a 1-acyl-sn-glycero-3-phosphate + CoA. The protein operates within phospholipid metabolism; CDP-diacylglycerol biosynthesis; CDP-diacylglycerol from sn-glycerol 3-phosphate: step 1/3. This is Glycerol-3-phosphate acyltransferase from Escherichia coli (strain SMS-3-5 / SECEC).